The chain runs to 218 residues: Large ribosomal subunit protein mL54 (218 aa).

It belongs to the mitochondrion-specific ribosomal protein mL54 family. As to quaternary structure, component of the mitochondrial large ribosomal subunit (mt-LSU). Mature N.crassa 74S mitochondrial ribosomes consist of a small (37S) and a large (54S) subunit. The 37S small subunit contains a 16S ribosomal RNA (16S mt-rRNA) and 32 different proteins. The 54S large subunit contains a 23S rRNA (23S mt-rRNA) and 42 different proteins.

It is found in the mitochondrion. Its function is as follows. Component of the mitochondrial ribosome (mitoribosome), a dedicated translation machinery responsible for the synthesis of mitochondrial genome-encoded proteins, including at least some of the essential transmembrane subunits of the mitochondrial respiratory chain. The mitoribosomes are attached to the mitochondrial inner membrane and translation products are cotranslationally integrated into the membrane. The polypeptide is Large ribosomal subunit protein mL54 (mrpl37) (Neurospora crassa (strain ATCC 24698 / 74-OR23-1A / CBS 708.71 / DSM 1257 / FGSC 987)).